A 179-amino-acid chain; its full sequence is Large ribosomal subunit protein uL6 (179 aa).

It belongs to the universal ribosomal protein uL6 family. In terms of assembly, part of the 50S ribosomal subunit.

Functionally, this protein binds to the 23S rRNA, and is important in its secondary structure. It is located near the subunit interface in the base of the L7/L12 stalk, and near the tRNA binding site of the peptidyltransferase center. The chain is Large ribosomal subunit protein uL6 from Prochlorococcus marinus (strain SARG / CCMP1375 / SS120).